Reading from the N-terminus, the 182-residue chain is NAD(P)H-quinone oxidoreductase subunit J (182 aa).

The protein belongs to the complex I 30 kDa subunit family. NDH-1 can be composed of about 15 different subunits; different subcomplexes with different compositions have been identified which probably have different functions.

The protein resides in the cellular thylakoid membrane. It catalyses the reaction a plastoquinone + NADH + (n+1) H(+)(in) = a plastoquinol + NAD(+) + n H(+)(out). The catalysed reaction is a plastoquinone + NADPH + (n+1) H(+)(in) = a plastoquinol + NADP(+) + n H(+)(out). Its function is as follows. NDH-1 shuttles electrons from an unknown electron donor, via FMN and iron-sulfur (Fe-S) centers, to quinones in the respiratory and/or the photosynthetic chain. The immediate electron acceptor for the enzyme in this species is believed to be plastoquinone. Couples the redox reaction to proton translocation, and thus conserves the redox energy in a proton gradient. Cyanobacterial NDH-1 also plays a role in inorganic carbon-concentration. This is NAD(P)H-quinone oxidoreductase subunit J from Synechococcus sp. (strain WH7803).